The chain runs to 585 residues: Folylpolyglutamate synthase, mitochondrial (585 aa).

A mitochondrion-targeting transit peptide spans 1–39 (MSRARCHALFLAAVSPRGATTRVAVRRGLSAWPVLQEPD). 103-106 (GKGS) contributes to the ATP binding site. Mg(2+)-binding residues include Ser127, Glu198, and His226. ATP-binding residues include Arg361 and Asp375. Residues 477 to 497 (EEQVSPDPWSTPGQEQDGPAS) are disordered. At Ser537 the chain carries Phosphoserine.

This sequence belongs to the folylpolyglutamate synthase family. In terms of assembly, monomer. The cofactor is a monovalent cation.

The protein localises to the mitochondrion inner membrane. It localises to the mitochondrion matrix. It is found in the cytoplasm. The enzyme catalyses (6S)-5,6,7,8-tetrahydrofolyl-(gamma-L-Glu)(n) + L-glutamate + ATP = (6S)-5,6,7,8-tetrahydrofolyl-(gamma-L-Glu)(n+1) + ADP + phosphate + H(+). It functions in the pathway cofactor biosynthesis; tetrahydrofolylpolyglutamate biosynthesis. Catalyzes conversion of folates to polyglutamate derivatives allowing concentration of folate compounds in the cell and the intracellular retention of these cofactors, which are important substrates for most of the folate-dependent enzymes that are involved in one-carbon transfer reactions involved in purine, pyrimidine and amino acid synthesis. This Bos taurus (Bovine) protein is Folylpolyglutamate synthase, mitochondrial (FPGS).